The chain runs to 1032 residues: MYEEIRMKFTDIFIRRPVLAVSISLLMIILGLQAISKLAVREYPKMTTTVITVSTAYPGADANLIQAFVTSKLEESIAQADNIDYMSSTSAPSSSTITIKMKLNTDPAGALADVLAKVNAVKSALPNGIEDPSVSSSSGGSGIMYISFRSKKLDSSQVTDYINRVVKPQFFTIEGVAEVQVFGAAEYALRIWLDPQKMAAQNLSVPTVMSALSANNVQTAAGNDNGYYVSYRNKVETTTKSVEQLSNLIISSNGDDLVRLRDIATVELNKENDNSRATANGAESVVLAINPTSTANPLTVAEKIRPLYESIKTQLPDSMESDILYDRTIAINSSIHEVIKTIGEATLIVLVVILMFIGSFRAILIPILAIPISLIGVLMLLQSFNFSINLMTLLALILAIGLVVDDAIVVLENIDRHIKAGETPFRAAIIGTREIAVPVISMTIALIAVYSPMALMGGITGTLFKEFALTLAGAVFISGVVALTLSPMMSSKLLKSNAKPTWMEERVEHTLGKVNRVYEYMLDLVMLNRKSMLAFAVVIFSTLPFLFNSLSSELTPNEDKGAFIAIGNAPSSVNVDYIQNAMQPYMKNVMETPEVSFGMSIAGAPTSNSSLNIITLKDWKERSRKQSAIMNEINEKAKSIPEVSVSAFNIPEIDTGEQGPPVSIVLKTAQDYKSLANTAEKFLSAMKASGKFIYTNLDLTYDTAQMTISVDKEKAGTYGITMQQISNTLGSFLSGATVTRVDVDGRAYKVISQVKRDDRLSPESFQNYYLTASNGQSVPLSSVISMKLETQPTSLPRFSQLNSAEISAVPMPGISSGDAIAWLQQQATDNLPQGYTFDFKSEARQLVQEGNALAVTFALAVIIIFLVLAIQFESIRDPMVIMISVPLAVSGALVSLNILSFFSIAGTTLNIYSQVGLITLVGLITKHGILMCEVAKEEQLNHGKTRIEAITHAAKVRLRPILMTTAAMVAGLIPLLYATGAGAVSRFSIGIVIVAGLSIGTIFTLFVLPVVYSYVATEHKPLPVFDENKTTH.

The Cytoplasmic portion of the chain corresponds to 1-17 (MYEEIRMKFTDIFIRRP). A helical transmembrane segment spans residues 18 to 36 (VLAVSISLLMIILGLQAIS). Topologically, residues 37-337 (KLAVREYPKM…TIAINSSIHE (301 aa)) are periplasmic. Residues 338–357 (VIKTIGEATLIVLVVILMFI) form a helical membrane-spanning segment. The Cytoplasmic segment spans residues 358-363 (GSFRAI). Residues 364-383 (LIPILAIPISLIGVLMLLQS) form a helical membrane-spanning segment. Over 384–389 (FNFSIN) the chain is Periplasmic. The helical transmembrane segment at 390–411 (LMTLLALILAIGLVVDDAIVVL) threads the bilayer. The Cytoplasmic portion of the chain corresponds to 412-438 (ENIDRHIKAGETPFRAAIIGTREIAVP). The chain crosses the membrane as a helical span at residues 439 to 457 (VISMTIALIAVYSPMALMG). Over 458 to 470 (GITGTLFKEFALT) the chain is Periplasmic. The helical transmembrane segment at 471–493 (LAGAVFISGVVALTLSPMMSSKL) threads the bilayer. Topologically, residues 494-529 (LKSNAKPTWMEERVEHTLGKVNRVYEYMLDLVMLNR) are cytoplasmic. The helical transmembrane segment at 530 to 548 (KSMLAFAVVIFSTLPFLFN) threads the bilayer. The Periplasmic segment spans residues 549–852 (SLSSELTPNE…ARQLVQEGNA (304 aa)). Residues 853–872 (LAVTFALAVIIIFLVLAIQF) form a helical membrane-spanning segment. Topologically, residues 873-878 (ESIRDP) are cytoplasmic. The chain crosses the membrane as a helical span at residues 879–898 (MVIMISVPLAVSGALVSLNI). Residues 899 to 910 (LSFFSIAGTTLN) lie on the Periplasmic side of the membrane. Residues 911–932 (IYSQVGLITLVGLITKHGILMC) form a helical membrane-spanning segment. Residues 933-960 (EVAKEEQLNHGKTRIEAITHAAKVRLRP) are Cytoplasmic-facing. The helical transmembrane segment at 961–979 (ILMTTAAMVAGLIPLLYAT) threads the bilayer. Residues 980–992 (GAGAVSRFSIGIV) lie on the Periplasmic side of the membrane. Residues 993 to 1015 (IVAGLSIGTIFTLFVLPVVYSYV) form a helical membrane-spanning segment. The Cytoplasmic segment spans residues 1016 to 1032 (ATEHKPLPVFDENKTTH).

This sequence belongs to the resistance-nodulation-cell division (RND) (TC 2.A.6) family.

It localises to the cell inner membrane. In terms of biological role, could be a drug efflux pump. This is an uncharacterized protein from Haemophilus influenzae (strain ATCC 51907 / DSM 11121 / KW20 / Rd).